The chain runs to 312 residues: uncharacterized protein (312 aa).

The next 8 helical transmembrane spans lie at 4 to 24, 45 to 65, 75 to 95, 117 to 137, 171 to 191, 217 to 237, 253 to 275, and 280 to 299; these read IFLA…KVIF, LITP…PLVL, IAGI…AVML, VILA…NLIW, GLGV…IQFL, TSMT…GVMI, AFIF…PLGI, and LLLI…AHTW.

It is found in the cell membrane. This is an uncharacterized protein from Bacillus subtilis (strain 168).